Consider the following 322-residue polypeptide: Tetraacyldisaccharide 4'-kinase (322 aa).

ATP is bound at residue 54–61; that stretch reads SVGGTGKT.

It belongs to the LpxK family.

The enzyme catalyses a lipid A disaccharide + ATP = a lipid IVA + ADP + H(+). It participates in glycolipid biosynthesis; lipid IV(A) biosynthesis; lipid IV(A) from (3R)-3-hydroxytetradecanoyl-[acyl-carrier-protein] and UDP-N-acetyl-alpha-D-glucosamine: step 6/6. Transfers the gamma-phosphate of ATP to the 4'-position of a tetraacyldisaccharide 1-phosphate intermediate (termed DS-1-P) to form tetraacyldisaccharide 1,4'-bis-phosphate (lipid IVA). This chain is Tetraacyldisaccharide 4'-kinase, found in Francisella philomiragia subsp. philomiragia (strain ATCC 25017 / CCUG 19701 / FSC 153 / O#319-036).